A 146-amino-acid chain; its full sequence is Large ribosomal subunit protein uL15 (146 aa).

The segment at 1–57 (MKLHELKPAQGSRKTRNRVGRGSSSGNGKTAGRGQKGQKARSGGNIRSGFEGGQTPL) is disordered. Residues 23–35 (SSSGNGKTAGRGQ) show a composition bias toward gly residues.

This sequence belongs to the universal ribosomal protein uL15 family. As to quaternary structure, part of the 50S ribosomal subunit.

Functionally, binds to the 23S rRNA. This chain is Large ribosomal subunit protein uL15, found in Streptococcus mutans serotype c (strain ATCC 700610 / UA159).